The sequence spans 675 residues: Vacuolar protein sorting-associated protein 5 (675 aa).

3 disordered regions span residues 1 to 26, 65 to 84, and 165 to 219; these read MDYE…QSLV, EWKD…EHDN, and RAQR…RREN. Positions 168 to 180 are enriched in basic residues; that stretch reads RNSKRNHSLKAKR. Over residues 195 to 204 the composition is skewed to basic and acidic residues; sequence PLKKAEKENE. One can recognise a PX domain in the interval 279–394; the sequence is VAFKVEVKDP…LFLTSDDFSS (116 aa). R320, K346, and R360 together coordinate a 1,2-diacyl-sn-glycero-3-phospho-(1D-myo-inositol-3-phosphate).

The protein belongs to the sorting nexin family. Component of the retromer complex which consists of VPS29, VPS26, VPS35, VPS5 and VPS17. Component of a retromer subcomplex consisting of VPSD5 and VPS17. Post-translationally, phosphorylated on serine residue(s).

Its subcellular location is the cytoplasm. It localises to the golgi apparatus membrane. The protein localises to the endosome membrane. Plays a role in vesicular protein sorting. Required for retention of late Golgi membrane proteins and vacuolar biogenesis. Component of the membrane-associated retromer complex which is essential in endosome-to-Golgi retrograde transport. The VPS5-VPS17 subcomplex may assemble onto the membrane to promote vesicle formation. In Saccharomyces cerevisiae (strain ATCC 204508 / S288c) (Baker's yeast), this protein is Vacuolar protein sorting-associated protein 5 (VPS5).